The primary structure comprises 791 residues: von Willebrand factor A domain-containing protein 2 (791 aa).

An N-terminal signal peptide occupies residues 1–23 (MPPLLLLPAIYMLLFFRVSPTIS). The VWFA 1 domain occupies 51–221 (DILFLLDGSH…DATNGLLSTL (171 aa)). Residue Asn146 is glycosylated (N-linked (GlcNAc...) asparagine). Residues 295-332 (PGPCDSQPCQNGGTCIPEGVDRYHCLCPLAFGGEVNCA) enclose the EGF-like 1 domain. 3 cysteine pairs are disulfide-bonded: Cys298-Cys309, Cys303-Cys319, and Cys321-Cys331. VWFA domains are found at residues 342–516 (DVLF…QRRL) and 530–704 (DLVF…IEWL). Positions 711-747 (PVNLCKPSPCMNEGTCVLKNGSYRCECRGGWEGPHCE) constitute an EGF-like 2 domain. Cystine bridges form between Cys715-Cys726, Cys720-Cys735, and Cys737-Cys746. The interval 762–791 (HQEPAGLQGPTPSQQAPKHLRIGKALSSAK) is disordered.

In terms of assembly, forms monomers and multimers. In terms of tissue distribution, detected in uterus, kidney, and skin. Also detected in intestine and lung of adult mice, and in calvaria, femur, brain, heart, intestine, skeletal muscle, and lung of newborn mice.

The protein resides in the secreted. In Mus musculus (Mouse), this protein is von Willebrand factor A domain-containing protein 2 (Vwa2).